The primary structure comprises 258 residues: Indole-3-glycerol phosphate synthase (258 aa).

It belongs to the TrpC family.

The enzyme catalyses 1-(2-carboxyphenylamino)-1-deoxy-D-ribulose 5-phosphate + H(+) = (1S,2R)-1-C-(indol-3-yl)glycerol 3-phosphate + CO2 + H2O. It functions in the pathway amino-acid biosynthesis; L-tryptophan biosynthesis; L-tryptophan from chorismate: step 4/5. The protein is Indole-3-glycerol phosphate synthase of Geobacillus thermodenitrificans (strain NG80-2).